Consider the following 176-residue polypeptide: Large ribosomal subunit protein uL6 (176 aa).

Belongs to the universal ribosomal protein uL6 family. As to quaternary structure, part of the 50S ribosomal subunit.

This protein binds to the 23S rRNA, and is important in its secondary structure. It is located near the subunit interface in the base of the L7/L12 stalk, and near the tRNA binding site of the peptidyltransferase center. The protein is Large ribosomal subunit protein uL6 of Burkholderia thailandensis (strain ATCC 700388 / DSM 13276 / CCUG 48851 / CIP 106301 / E264).